The primary structure comprises 385 residues: S-adenosylmethionine synthase (385 aa).

H16 contributes to the ATP binding site. D18 contacts Mg(2+). Position 44 (E44) interacts with K(+). Positions 57 and 100 each coordinate L-methionine. Residues 100-110 (QSPDINQGVDR) form a flexible loop region. ATP-binding positions include 164 to 166 (DGK), 230 to 231 (KF), D239, 245 to 246 (RK), A262, and K266. D239 contributes to the L-methionine binding site. K270 serves as a coordination point for L-methionine.

The protein belongs to the AdoMet synthase family. In terms of assembly, homotetramer; dimer of dimers. Requires Mg(2+) as cofactor. The cofactor is K(+).

It localises to the cytoplasm. It carries out the reaction L-methionine + ATP + H2O = S-adenosyl-L-methionine + phosphate + diphosphate. It participates in amino-acid biosynthesis; S-adenosyl-L-methionine biosynthesis; S-adenosyl-L-methionine from L-methionine: step 1/1. Its function is as follows. Catalyzes the formation of S-adenosylmethionine (AdoMet) from methionine and ATP. The overall synthetic reaction is composed of two sequential steps, AdoMet formation and the subsequent tripolyphosphate hydrolysis which occurs prior to release of AdoMet from the enzyme. The sequence is that of S-adenosylmethionine synthase from Helicobacter pylori (strain HPAG1).